A 388-amino-acid chain; its full sequence is Na(+)/H(+) antiporter NhaA (388 aa).

Topologically, residues 1-11 (MKHLHRFFSSD) are cytoplasmic. Residues 12–31 (ASGGIILIIAAILAMIMANS) form a helical membrane-spanning segment. Residues 32–58 (GATSGWYHDFLETPVQLRVGSLEINKN) are Periplasmic-facing. A helical transmembrane segment spans residues 59 to 80 (MLLWINDALMAVFFLLVGLEVK). Topologically, residues 81-96 (RELMQGSLASLLQAAF) are cytoplasmic. Residues 97–116 (PVIAAIGGMIVPALLYLAFN) form a helical membrane-spanning segment. Over 117–122 (YADPIT) the chain is Periplasmic. A helical transmembrane segment spans residues 123–130 (REGWAIPA). Topologically, residues 131-154 (ATDIAFALGVLALLGSRVPLVLKI) are cytoplasmic. A helical transmembrane segment spans residues 155 to 176 (FLMALAIIDDLGAIIIIALFYT). Topologically, residues 177–180 (NDLS) are periplasmic. Residues 181–200 (MASLGVAAVAIAVLAVLNLC) form a helical membrane-spanning segment. Topologically, residues 201–204 (GVRR) are cytoplasmic. Residues 205 to 222 (TGVYILVGVVLWTAVLKS) traverse the membrane as a helical segment. Residue Gly223 is a topological domain, periplasmic. The helical transmembrane segment at 224-236 (VHATLAGVIVGFF) threads the bilayer. Residues 237 to 253 (IPLKEKHGRSPAKRLEH) lie on the Cytoplasmic side of the membrane. The helical transmembrane segment at 254 to 272 (VLHPWVAYLILPLFAFANA) threads the bilayer. The Periplasmic portion of the chain corresponds to 273-286 (GVSLQGVTLDGLTS). Residues 287–310 (ILPLGIIAGLLIGKPLGISLFCWL) traverse the membrane as a helical segment. Residues 311–339 (ALRLKLAHLPEGTTYQQIMVVGILCGIGF) lie on the Cytoplasmic side of the membrane. The helical transmembrane segment at 340–350 (TMSIFIASLAF) threads the bilayer. At 351 to 357 (GSVDPEL) the chain is on the periplasmic side. Residues 358-380 (INWAKLGILVGSISSAVIGYSWL) form a helical membrane-spanning segment. The Cytoplasmic portion of the chain corresponds to 381-388 (RVRLRPSV).

The protein belongs to the NhaA Na(+)/H(+) (TC 2.A.33) antiporter family.

The protein resides in the cell inner membrane. It carries out the reaction Na(+)(in) + 2 H(+)(out) = Na(+)(out) + 2 H(+)(in). Its function is as follows. Na(+)/H(+) antiporter that extrudes sodium in exchange for external protons. This is Na(+)/H(+) antiporter NhaA from Shigella flexneri serotype 5b (strain 8401).